Consider the following 417-residue polypeptide: Tyrosine--tRNA ligase (417 aa).

An L-tyrosine-binding site is contributed by Tyr-39. The 'HIGH' region motif lies at 44 to 53 (PTAPSLHAGG). L-tyrosine contacts are provided by Tyr-176 and Gln-180. Residues 236–240 (KMGKS) carry the 'KMSKS' region motif. ATP is bound at residue Lys-239. Residues 350 to 417 (IGVLALMVLA…KKRHVLIRPA (68 aa)) form the S4 RNA-binding domain.

The protein belongs to the class-I aminoacyl-tRNA synthetase family. TyrS type 1 subfamily. Homodimer.

Its subcellular location is the cytoplasm. It carries out the reaction tRNA(Tyr) + L-tyrosine + ATP = L-tyrosyl-tRNA(Tyr) + AMP + diphosphate + H(+). Functionally, catalyzes the attachment of tyrosine to tRNA(Tyr) in a two-step reaction: tyrosine is first activated by ATP to form Tyr-AMP and then transferred to the acceptor end of tRNA(Tyr). The polypeptide is Tyrosine--tRNA ligase (Brucella suis biovar 1 (strain 1330)).